A 320-amino-acid polypeptide reads, in one-letter code: SPX domain-containing protein 4 (320 aa).

The SPX domain occupies 1–170 (MKFGKDFRSH…GGLLSLPFTQ (170 aa)). Disordered regions lie at residues 209–233 (SSSA…VDVE) and 275–320 (CSGA…PRDE). A compositionally biased stretch (polar residues) spans 278–289 (AITSESDSYSDS). Acidic residues predominate over residues 290–299 (QIEDAEDDDK). Over residues 304–313 (REQNTAQNAA) the composition is skewed to polar residues.

As to quaternary structure, homodimer. Interacts (via N-terminus) with PHR2 (via C-terminus) in the presence of inositol polyphosphate. Interacts with BHLH6. Post-translationally, degraded under Pi starvation conditions through the ubiquitin/26S proteasome pathway. As to expression, widely expressed. Detected in root cells, with the exception of epidermis, and in mesophyll and vascular bundles in leaves.

The protein localises to the membrane. The protein resides in the nucleus. It localises to the cytoplasm. Its function is as follows. Inositol polyphosphate sensor that associates with transcription factors to regulate Pi starvation responses. The SPX domain provides a basic binding surface for inositol polyphosphate signaling molecules. Interacts with PHR2 to inhibit its translocation to the nucleus and repress its DNA-binding activity, and then negatively regulate Pi signaling. This Oryza sativa subsp. japonica (Rice) protein is SPX domain-containing protein 4.